The primary structure comprises 617 residues: MAEAKTHWLGAALSLIPLIFLISGAEAASFQRNQLLQKEPDLRLENVQKFPSPEMIRALEYIENLRQQAHKEESSPDYNPYQGVSVPLQQKENGDESHLPERDSLSEEDWMRIILEALRQAENEPQSAPKENKPYALNSEKNFPMDMSDDYETQQWPERKLKHMQFPPMYEENSRDNPFKRTNEIVEEQYTPQSLATLESVFQELGKLTGPNNQKRERMDEEQKLYTDDEDDIYKANNIAYEDVVGGEDWNPVEEKIESQTQEEVRDSKENIEKNEQINDEMKRSGQLGIQEEDLRKESKDQLSDDVSKVIAYLKRLVNAAGSGRLQNGQNGERATRLFEKPLDSQSIYQLIEISRNLQIPPEDLIEMLKTGEKPNGSVEPERELDLPVDLDDISEADLDHPDLFQNRMLSKSGYPKTPGRAGTEALPDGLSVEDILNLLGMESAANQKTSYFPNPYNQEKVLPRLPYGAGRSRSNQLPKAAWIPHVENRQMAYENLNDKDQELGEYLARMLVKYPEIINSNQVKRVPGQGSSEDDLQEEEQIEQAIKEHLNQGSSQETDKLAPVSKRFPVGPPKNDDTPNRQYWDEDLLMKVLEYLNQEKAEKGREHIAKRAMENM.

A signal peptide spans 1–27; it reads MAEAKTHWLGAALSLIPLIFLISGAEA. A propeptide spanning residues 28–30 is cleaved from the precursor; that stretch reads ASF. The interval 120 to 143 is disordered; sequence QAENEPQSAPKENKPYALNSEKNF. Y151 is modified (sulfotyrosine). S174 carries the phosphoserine modification. An O-glycosylated at one site region spans residues 182–200; sequence TNEIVEEQYTPQSLATLES. 2 stretches are compositionally biased toward basic and acidic residues: residues 257–284 and 293–302; these read IESQ…EMKR and EDLRKESKDQ. Residues 257-302 form a disordered region; the sequence is IESQTQEEVRDSKENIEKNEQINDEMKRSGQLGIQEEDLRKESKDQ. Residue S268 is modified to Phosphoserine. Phosphoserine occurs at positions 432, 532, 555, and 556. The interval 552–583 is disordered; sequence NQGSSQETDKLAPVSKRFPVGPPKNDDTPNRQ.

Belongs to the chromogranin/secretogranin protein family. As to quaternary structure, interacts with Secretogranin III/SCG3. In terms of processing, O-glycosylated.

The protein resides in the secreted. Neuroendocrine protein of the granin family that regulates the biogenesis of secretory granules. In Homo sapiens (Human), this protein is Secretogranin-2 (SCG2).